Consider the following 358-residue polypeptide: Homer protein homolog 3 (358 aa).

The segment at methionine 1 to tryptophan 80 is required for interaction with NFATC2. Residues methionine 1 to alanine 113 enclose the WH1 domain. Residues serine 95–aspartate 122 are a coiled coil. Serine 120 and serine 158 each carry phosphoserine. 2 disordered regions span residues glutamine 137–glutamate 168 and alanine 239–aspartate 296. Residues alanine 190–glutamate 355 are a coiled coil. The span at leucine 257–glutamate 267 shows a compositional bias: basic and acidic residues. The segment covering isoleucine 268–glycine 277 has biased composition (polar residues). The span at glutamate 280–threonine 290 shows a compositional bias: basic and acidic residues.

It belongs to the Homer family. Tetramer. Encodes coiled-coil structures that mediate homo- and heteromultimerization. Interacts with NFATC2; interaction is calcium independent; interaction competes with PPP3CA for NFATC2 binding; interaction is reduced by AKT activation. Interacts with NFATC1 and NFATC4. Interacts with SHANK1; forms a high-order complex at least composed of SHANK1 and HOMER3; the complex formation is regulated by CAMK2A-mediated phosphorylation.

It localises to the cytoplasm. The protein localises to the postsynaptic density. Its subcellular location is the synapse. Functionally, postsynaptic density scaffolding protein. Binds and cross-links cytoplasmic regions of GRM1, GRM5, ITPR1, DNM3, RYR1, RYR2, SHANK1 and SHANK3. By physically linking GRM1 and GRM5 with ER-associated ITPR1 receptors, it aids the coupling of surface receptors to intracellular calcium release. Negatively regulates T cell activation by inhibiting the calcineurin-NFAT pathway. Acts by competing with calcineurin/PPP3CA for NFAT protein binding, hence preventing NFAT activation by PPP3CA. The sequence is that of Homer protein homolog 3 from Rattus norvegicus (Rat).